The primary structure comprises 35 residues: Jingzhaotoxin F5-21.66 (35 aa).

Intrachain disulfides connect C2–C16, C9–C21, and C15–C29.

Belongs to the neurotoxin 10 (Hwtx-1) family. 48 (Jztx-F5) subfamily. As to expression, expressed by the venom gland.

The protein resides in the secreted. Functionally, probable ion channel inhibitor. This is Jingzhaotoxin F5-21.66 from Chilobrachys guangxiensis (Chinese earth tiger tarantula).